Here is a 435-residue protein sequence, read N- to C-terminus: Increased rDNA silencing protein 4 (435 aa).

Disordered stretches follow at residues 1-20, 39-71, 136-204, and 233-277; these read MKIPVTADAESASKDGLQHD, ASIPLEKASFSRQAPSQNPSITAKPPIPPQRAA, ASKA…NHTL, and GSKR…PDEI. The span at 11-20 shows a compositional bias: basic and acidic residues; it reads SASKDGLQHD. The span at 48-59 shows a compositional bias: polar residues; sequence FSRQAPSQNPSI. Low complexity-rich tracts occupy residues 174 to 186 and 249 to 265; these read SSQLSTESELLQL and QRGSPSQPLLQLSSDSS. Residues 327 to 435 enclose the EH domain; that stretch reads ERKRYEEVWE…VPKSVWKSVQ (109 aa).

Belongs to the IRS4 family.

Functionally, positive regulator of phosphatidylinositol 4,5-bisphosphate turnover and negatively regulates signaling through the cell integrity pathway. Involved in rDNA silencing. This Coccidioides immitis (strain RS) (Valley fever fungus) protein is Increased rDNA silencing protein 4 (IRS4).